The chain runs to 270 residues: Putative phosphoenolpyruvate synthase regulatory protein (270 aa).

Residue G150 to T157 participates in ADP binding.

This sequence belongs to the pyruvate, phosphate/water dikinase regulatory protein family. PSRP subfamily.

The enzyme catalyses [pyruvate, water dikinase] + ADP = [pyruvate, water dikinase]-phosphate + AMP + H(+). It carries out the reaction [pyruvate, water dikinase]-phosphate + phosphate + H(+) = [pyruvate, water dikinase] + diphosphate. Functionally, bifunctional serine/threonine kinase and phosphorylase involved in the regulation of the phosphoenolpyruvate synthase (PEPS) by catalyzing its phosphorylation/dephosphorylation. In Aeromonas hydrophila subsp. hydrophila (strain ATCC 7966 / DSM 30187 / BCRC 13018 / CCUG 14551 / JCM 1027 / KCTC 2358 / NCIMB 9240 / NCTC 8049), this protein is Putative phosphoenolpyruvate synthase regulatory protein.